We begin with the raw amino-acid sequence, 89 residues long: Co-chaperonin GroES (89 aa).

This sequence belongs to the GroES chaperonin family. Heptamer of 7 subunits arranged in a ring. Interacts with the chaperonin GroEL.

It is found in the cytoplasm. In terms of biological role, together with the chaperonin GroEL, plays an essential role in assisting protein folding. The GroEL-GroES system forms a nano-cage that allows encapsulation of the non-native substrate proteins and provides a physical environment optimized to promote and accelerate protein folding. GroES binds to the apical surface of the GroEL ring, thereby capping the opening of the GroEL channel. This Petrotoga mobilis (strain DSM 10674 / SJ95) protein is Co-chaperonin GroES.